Here is a 390-residue protein sequence, read N- to C-terminus: Endonuclease 8-like 1 (390 aa).

Residue Pro2 is the Schiff-base intermediate with DNA of the active site. Glu3 functions as the Proton donor in the catalytic mechanism. The Proton donor; for beta-elimination activity role is filled by Lys54. Asn176 contacts DNA. Residues 278 to 390 are disordered; the sequence is TIWFQGDPGP…SLEPEGTSAS (113 aa). Residues 291-301 show a composition bias toward basic residues; sequence KGRKSRKKKSK. Over residues 335–347 the composition is skewed to polar residues; that stretch reads TATQRPEGTSLQQ. Residue Arg339 participates in DNA binding. Arg339 functions as the Proton donor; for delta-elimination activity in the catalytic mechanism.

It belongs to the FPG family. In terms of tissue distribution, ubiquitous.

The protein localises to the cytoplasm. Its subcellular location is the cytoskeleton. It is found in the microtubule organizing center. The protein resides in the centrosome. It localises to the nucleus. The protein localises to the chromosome. The enzyme catalyses 2'-deoxyribonucleotide-(2'-deoxyribose 5'-phosphate)-2'-deoxyribonucleotide-DNA = a 3'-end 2'-deoxyribonucleotide-(2,3-dehydro-2,3-deoxyribose 5'-phosphate)-DNA + a 5'-end 5'-phospho-2'-deoxyribonucleoside-DNA + H(+). In terms of biological role, involved in base excision repair of DNA damaged by oxidation or by mutagenic agents. Acts as a DNA glycosylase that recognizes and removes damaged bases. Has a preference for oxidized pyrimidines, such as thymine glycol, formamidopyrimidine (Fapy) and 5-hydroxyuracil. Has marginal activity towards 8-oxoguanine. Has AP (apurinic/apyrimidinic) lyase activity and introduces nicks in the DNA strand. Cleaves the DNA backbone by beta-delta elimination to generate a single-strand break at the site of the removed base with both 3'- and 5'-phosphates. Has DNA glycosylase/lyase activity towards mismatched uracil and thymine, in particular in U:C and T:C mismatches. Specifically binds 5-hydroxymethylcytosine (5hmC), suggesting that it acts as a specific reader of 5hmC. The sequence is that of Endonuclease 8-like 1 (NEIL1) from Homo sapiens (Human).